The chain runs to 270 residues: Homeobox protein Hox-D12 (270 aa).

The segment at 102-122 (APEAAAGPEERGRTRPSFAPE) is disordered. The homeobox DNA-binding region spans 202-261 (ARKKRKPYTKQQIAELENEFLVNEFINRQKRKELSNRLNLSDQQVKIWFQNRRMKKKRVV).

Belongs to the Abd-B homeobox family.

It is found in the nucleus. Its function is as follows. Sequence-specific transcription factor which is part of a developmental regulatory system that provides cells with specific positional identities on the anterior-posterior axis. This is Homeobox protein Hox-D12 (HOXD12) from Homo sapiens (Human).